We begin with the raw amino-acid sequence, 426 residues long: DUF724 domain-containing protein 9 (426 aa).

2 stretches are compositionally biased toward polar residues: residues 164 to 184 (ESSL…NANE) and 213 to 222 (PRNQNASVND). Residues 164-248 (ESSLTQGSGD…REESLCSDAS (85 aa)) are disordered. Residues 223–242 (STRENENSEDINRKRKREES) show a composition bias toward basic and acidic residues. The 170-residue stretch at 256-425 (LPFEKKLSIW…LQFQTTASAP (170 aa)) folds into the DUF724 domain. A coiled-coil region spans residues 370–402 (AEKESIKIENERKILELQRLNEEVDKEIAQSKS).

Expressed in flowers.

Its subcellular location is the nucleus. In terms of biological role, may be involved in the polar growth of plant cells via transportation of RNAs. The protein is DUF724 domain-containing protein 9 of Arabidopsis thaliana (Mouse-ear cress).